The chain runs to 147 residues: Probable 4-amino-4-deoxy-L-arabinose-phosphoundecaprenol flippase subunit ArnF (147 aa).

Topologically, residues 1–23 (MSNDHPQGQLPASPARSALKGYL) are cytoplasmic. A helical transmembrane segment spans residues 24–44 (YVLGSILLVTAAQLGMKWGVI). At 45 to 62 (QLPTWQMDLAVMLAHPLP) the chain is on the periplasmic side. Residues 63–83 (LLVILAGVGCYALSLLCWLAA) form a helical membrane-spanning segment. At 84-93 (LHSTPLNIAY) the chain is on the cytoplasmic side. The helical transmembrane segment at 94 to 114 (PLLSTSYALVYLLAVNIPLFA) threads the bilayer. Topologically, residues 115 to 121 (EPLEPGK) are periplasmic. The chain crosses the membrane as a helical span at residues 122–142 (ALGVLFILLGAVLVGIKPAAG). The Cytoplasmic portion of the chain corresponds to 143–147 (TKQTG).

It belongs to the ArnF family. Heterodimer of ArnE and ArnF.

It localises to the cell inner membrane. It functions in the pathway bacterial outer membrane biogenesis; lipopolysaccharide biosynthesis. Functionally, translocates 4-amino-4-deoxy-L-arabinose-phosphoundecaprenol (alpha-L-Ara4N-phosphoundecaprenol) from the cytoplasmic to the periplasmic side of the inner membrane. The polypeptide is Probable 4-amino-4-deoxy-L-arabinose-phosphoundecaprenol flippase subunit ArnF (Aeromonas hydrophila subsp. hydrophila (strain ATCC 7966 / DSM 30187 / BCRC 13018 / CCUG 14551 / JCM 1027 / KCTC 2358 / NCIMB 9240 / NCTC 8049)).